A 508-amino-acid chain; its full sequence is Photosystem II CP47 reaction center protein (508 aa).

6 consecutive transmembrane segments (helical) span residues serine 21 to serine 36, isoleucine 101 to tryptophan 115, glycine 140 to phenylalanine 156, isoleucine 203 to serine 218, valine 237 to valine 252, and serine 457 to arginine 472.

Belongs to the PsbB/PsbC family. PsbB subfamily. PSII is composed of 1 copy each of membrane proteins PsbA, PsbB, PsbC, PsbD, PsbE, PsbF, PsbH, PsbI, PsbJ, PsbK, PsbL, PsbM, PsbT, PsbX, PsbY, PsbZ, Psb30/Ycf12, at least 3 peripheral proteins of the oxygen-evolving complex and a large number of cofactors. It forms dimeric complexes. The cofactor is Binds multiple chlorophylls. PSII binds additional chlorophylls, carotenoids and specific lipids..

It is found in the plastid. Its subcellular location is the chloroplast thylakoid membrane. In terms of biological role, one of the components of the core complex of photosystem II (PSII). It binds chlorophyll and helps catalyze the primary light-induced photochemical processes of PSII. PSII is a light-driven water:plastoquinone oxidoreductase, using light energy to abstract electrons from H(2)O, generating O(2) and a proton gradient subsequently used for ATP formation. This Gossypium barbadense (Sea Island cotton) protein is Photosystem II CP47 reaction center protein.